We begin with the raw amino-acid sequence, 59 residues long: UPF0434 protein Mmc1_0910 (59 aa).

The protein belongs to the UPF0434 family.

This chain is UPF0434 protein Mmc1_0910, found in Magnetococcus marinus (strain ATCC BAA-1437 / JCM 17883 / MC-1).